Reading from the N-terminus, the 361-residue chain is Phospho-N-acetylmuramoyl-pentapeptide-transferase (361 aa).

The next 10 membrane-spanning stretches (helical) occupy residues 28 to 48 (LAAL…IRSL), 73 to 93 (TMGG…WADL), 97 to 117 (YIWV…VDDY), 134 to 154 (FFWQ…TADL), 168 to 188 (VAIP…IVGT), 200 to 220 (GLAI…AYVA), 237 to 257 (AGEL…FLWF), 264 to 284 (VFMG…ITVI), 289 to 309 (IVLV…MIQV), and 338 to 358 (QVVV…LSTL).

The protein belongs to the glycosyltransferase 4 family. MraY subfamily. It depends on Mg(2+) as a cofactor.

Its subcellular location is the cell inner membrane. It carries out the reaction UDP-N-acetyl-alpha-D-muramoyl-L-alanyl-gamma-D-glutamyl-meso-2,6-diaminopimeloyl-D-alanyl-D-alanine + di-trans,octa-cis-undecaprenyl phosphate = di-trans,octa-cis-undecaprenyl diphospho-N-acetyl-alpha-D-muramoyl-L-alanyl-D-glutamyl-meso-2,6-diaminopimeloyl-D-alanyl-D-alanine + UMP. It functions in the pathway cell wall biogenesis; peptidoglycan biosynthesis. In terms of biological role, catalyzes the initial step of the lipid cycle reactions in the biosynthesis of the cell wall peptidoglycan: transfers peptidoglycan precursor phospho-MurNAc-pentapeptide from UDP-MurNAc-pentapeptide onto the lipid carrier undecaprenyl phosphate, yielding undecaprenyl-pyrophosphoryl-MurNAc-pentapeptide, known as lipid I. This is Phospho-N-acetylmuramoyl-pentapeptide-transferase from Nitrosomonas europaea (strain ATCC 19718 / CIP 103999 / KCTC 2705 / NBRC 14298).